We begin with the raw amino-acid sequence, 359 residues long: Phosphate acyltransferase (359 aa).

Belongs to the PlsX family. In terms of assembly, homodimer. Probably interacts with PlsY.

The protein localises to the cytoplasm. The catalysed reaction is a fatty acyl-[ACP] + phosphate = an acyl phosphate + holo-[ACP]. The protein operates within lipid metabolism; phospholipid metabolism. Functionally, catalyzes the reversible formation of acyl-phosphate (acyl-PO(4)) from acyl-[acyl-carrier-protein] (acyl-ACP). This enzyme utilizes acyl-ACP as fatty acyl donor, but not acyl-CoA. The protein is Phosphate acyltransferase of Koribacter versatilis (strain Ellin345).